The primary structure comprises 72 residues: Cytotoxin 9 (72 aa).

An N-terminal signal peptide occupies residues valine 1–threonine 12. Disulfide bonds link cysteine 15–cysteine 33, cysteine 26–cysteine 50, cysteine 54–cysteine 65, and cysteine 66–cysteine 71.

The protein belongs to the three-finger toxin family. Short-chain subfamily. Type IA cytotoxin sub-subfamily. As to quaternary structure, monomer in solution; Homodimer and oligomer in the presence of negatively charged lipids forming a pore with a size ranging between 20 and 30 Angstroms. As to expression, expressed by the venom gland.

It is found in the secreted. Functionally, shows cytolytic activity on many different cells by forming a pore in lipid membranes. In vivo, increases heart rate or kills the animal by cardiac arrest. In addition, it binds to heparin with high affinity, interacts with Kv channel-interacting protein 1 (KCNIP1) in a calcium-independent manner, and binds to integrin alpha-V/beta-3 (ITGAV/ITGB3) with moderate affinity. Preferentially binds acidic phospholipids like phosphatidylserine, phosphatidic acid and phosphatidyl glycerol. Has hemolytic activity towards human erythrocytes (EC(50)=0.171 uM) and cytolytic activity towards various cell lines. This is Cytotoxin 9 from Naja naja (Indian cobra).